Here is a 194-residue protein sequence, read N- to C-terminus: PPE family protein PPE41 (194 aa).

The protein belongs to the mycobacterial PPE family. Forms a heterodimer with PE25. The dimer forms a 1:1:1 heterotrimeric complex with EspG5. PPE41 interacts directly with EspG5.

It localises to the secreted. The protein localises to the cell surface. Its function is as follows. The PE25/PPE41 dimer induces both a strong humoral and cellular immune response. The dimer induces necrosis, but not apoptosis, in mouse macrophage cells. It also induces activation and maturation of mouse dendritic cells and drives Th2-biased immune responses. In Mycobacterium tuberculosis (strain ATCC 25618 / H37Rv), this protein is PPE family protein PPE41.